The primary structure comprises 368 residues: Protein-glutamate methylesterase/protein-glutamine glutaminase 2 (368 aa).

A Response regulatory domain is found at 6 to 123 (KVLLVDDSAV…KEYLESAAGE (118 aa)). Residue Asp57 is modified to 4-aspartylphosphate. The region spanning 169 to 355 (IAGANKIAAL…SLERIPQCVL (187 aa)) is the CheB-type methylesterase domain. Residues Ser181, His207, and Asp303 contribute to the active site.

It belongs to the CheB family. Phosphorylated by CheA. Phosphorylation of the N-terminal regulatory domain activates the methylesterase activity.

Its subcellular location is the cytoplasm. The enzyme catalyses [protein]-L-glutamate 5-O-methyl ester + H2O = L-glutamyl-[protein] + methanol + H(+). The catalysed reaction is L-glutaminyl-[protein] + H2O = L-glutamyl-[protein] + NH4(+). Its function is as follows. Involved in chemotaxis. Part of a chemotaxis signal transduction system that modulates chemotaxis in response to various stimuli. Catalyzes the demethylation of specific methylglutamate residues introduced into the chemoreceptors (methyl-accepting chemotaxis proteins or MCP) by CheR. Also mediates the irreversible deamidation of specific glutamine residues to glutamic acid. The polypeptide is Protein-glutamate methylesterase/protein-glutamine glutaminase 2 (Hahella chejuensis (strain KCTC 2396)).